A 43-amino-acid polypeptide reads, in one-letter code: Subtilosin-A (43 aa).

Residues 1–8 constitute a propeptide that is removed on maturation; sequence MKKAVIVE. Residues 9-43 constitute a cross-link (cyclopeptide (Asn-Gly)); that stretch reads NKGCATCSIGAACLVDGPIPDFEIAGATGLFGLWG. The segment at residues 12-39 is a cross-link (2-cysteinyl-D-phenylalanine (Cys-Phe)); sequence CATCSIGAACLVDGPIPDFEIAGATGLF. Positions 15-36 form a cross-link, 2-cysteinyl-D-allo-threonine (Cys-Thr); the sequence is CSIGAACLVDGPIPDFEIAGAT. The 2-cysteinyl-L-phenylalanine (Cys-Phe) cross-link spans 21-30; sequence CLVDGPIPDF.

It belongs to the bacteriocin class V family. Post-translationally, this sactipeptide undergoes unique processing steps that include proteolytic cleavage after Glu-8, and covalent linkage of the alpha-amino of Asn-9 with the carboxyl of Gly-43 to form a cyclopeptide. Thioether cross-links are formed between cysteines and the alpha-carbons of other amino acids, Cys-12 to Phe-39, Cys-15 to Thr-36, and Cys-21 to Phe-30. In forming these cross-links, Thr-36 and Phe-39 are converted to D-amino acids. Propeptide cleavage and cyclopeptide formation only occur after all 3 thioether cross-links are formed.

It is found in the secreted. Its function is as follows. Has bacteriocidal activity against some Gram-positive bacteria such as Listeria, some species of Bacillus and E.faecium. A single mutation (Thr-14-Ile) confers hemolytic activity against rabbit and human blood. The polypeptide is Subtilosin-A (sboA) (Bacillus subtilis (strain 168)).